Reading from the N-terminus, the 319-residue chain is Acetyl-coenzyme A carboxylase carboxyl transferase subunit alpha (319 aa).

The 262-residue stretch at asparagine 35–aspartate 296 folds into the CoA carboxyltransferase C-terminal domain.

Belongs to the AccA family. In terms of assembly, acetyl-CoA carboxylase is a heterohexamer composed of biotin carboxyl carrier protein (AccB), biotin carboxylase (AccC) and two subunits each of ACCase subunit alpha (AccA) and ACCase subunit beta (AccD).

It localises to the cytoplasm. The catalysed reaction is N(6)-carboxybiotinyl-L-lysyl-[protein] + acetyl-CoA = N(6)-biotinyl-L-lysyl-[protein] + malonyl-CoA. It participates in lipid metabolism; malonyl-CoA biosynthesis; malonyl-CoA from acetyl-CoA: step 1/1. Its function is as follows. Component of the acetyl coenzyme A carboxylase (ACC) complex. First, biotin carboxylase catalyzes the carboxylation of biotin on its carrier protein (BCCP) and then the CO(2) group is transferred by the carboxyltransferase to acetyl-CoA to form malonyl-CoA. This Edwardsiella ictaluri (strain 93-146) protein is Acetyl-coenzyme A carboxylase carboxyl transferase subunit alpha.